Reading from the N-terminus, the 55-residue chain is Histone H1 (55 aa).

Residues 1 to 15 (MAEVAPAPAAAAPAK) are compositionally biased toward low complexity. A disordered region spans residues 1–28 (MAEVAPAPAAAAPAKAPKKKAAAKPKKA). An N-acetylalanine modification is found at Ala-2. Basic residues predominate over residues 16 to 27 (APKKKAAAKPKK). In terms of domain architecture, H15 spans 28-55 (AGPSVGELIVKAVSASKERSGVSLAALK).

Belongs to the histone H1/H5 family.

The protein resides in the nucleus. It localises to the chromosome. It is found in the secreted. Histones H1 are necessary for the condensation of nucleosome chains into higher-order structures. Functionally, SAMP H1 has antibacterial activity against Gram-negative bacteria E.coli, A.salmonicida subsp salmonicida, V.anguillarum and S.typhimurium and Gram-positive bacteria B.subtilis and L.ivanovii. The protein is Histone H1 of Salmo salar (Atlantic salmon).